Here is a 365-residue protein sequence, read N- to C-terminus: 3-isopropylmalate dehydrogenase (365 aa).

78-91 lines the NAD(+) pocket; sequence GYKWDSLPRSQRPE. Substrate is bound by residues Arg-98, Arg-108, Arg-136, and Asp-226. 3 residues coordinate Mg(2+): Asp-226, Asp-250, and Asp-254. An NAD(+)-binding site is contributed by 284 to 296; sequence GSAPDIAGQDKAN.

Belongs to the isocitrate and isopropylmalate dehydrogenases family. LeuB type 1 subfamily. In terms of assembly, homodimer. It depends on Mg(2+) as a cofactor. Mn(2+) is required as a cofactor.

The protein resides in the cytoplasm. It catalyses the reaction (2R,3S)-3-isopropylmalate + NAD(+) = 4-methyl-2-oxopentanoate + CO2 + NADH. Its pathway is amino-acid biosynthesis; L-leucine biosynthesis; L-leucine from 3-methyl-2-oxobutanoate: step 3/4. Functionally, catalyzes the oxidation of 3-carboxy-2-hydroxy-4-methylpentanoate (3-isopropylmalate) to 3-carboxy-4-methyl-2-oxopentanoate. The product decarboxylates to 4-methyl-2 oxopentanoate. This chain is 3-isopropylmalate dehydrogenase, found in Synechococcus elongatus (strain ATCC 33912 / PCC 7942 / FACHB-805) (Anacystis nidulans R2).